The sequence spans 185 residues: MAEATYTPKLRTFYDEVVRPKMIEQFGYKNPMEVPTIDKIVINMGVGEATADTKKVTTAAADLAQIAGQKPVITRARKAISNFKLRENQPVGAKVTLRKARMYEFMDRLVSIALPRVRDFRGLNPKSFDGRGNYAMGVKEHIVFPEINYDRVEQIWGMDIIVCTTAKTDEEARALLKAFNFPFRQ.

This sequence belongs to the universal ribosomal protein uL5 family. As to quaternary structure, part of the 50S ribosomal subunit; part of the 5S rRNA/L5/L18/L25 subcomplex. Contacts the 5S rRNA and the P site tRNA. Forms a bridge to the 30S subunit in the 70S ribosome.

Functionally, this is one of the proteins that bind and probably mediate the attachment of the 5S RNA into the large ribosomal subunit, where it forms part of the central protuberance. In the 70S ribosome it contacts protein S13 of the 30S subunit (bridge B1b), connecting the 2 subunits; this bridge is implicated in subunit movement. Contacts the P site tRNA; the 5S rRNA and some of its associated proteins might help stabilize positioning of ribosome-bound tRNAs. In Xanthobacter autotrophicus (strain ATCC BAA-1158 / Py2), this protein is Large ribosomal subunit protein uL5.